Consider the following 228-residue polypeptide: UPF0173 metal-dependent hydrolase Smar_0891 (228 aa).

The protein belongs to the UPF0173 family.

In Staphylothermus marinus (strain ATCC 43588 / DSM 3639 / JCM 9404 / F1), this protein is UPF0173 metal-dependent hydrolase Smar_0891.